The chain runs to 246 residues: Probable transcriptional regulatory protein TM1040_1893 (246 aa).

Residues 1-21 are disordered; the sequence is MAGHSKWANIQHRKGRQDAAR.

This sequence belongs to the TACO1 family.

The protein localises to the cytoplasm. This chain is Probable transcriptional regulatory protein TM1040_1893, found in Ruegeria sp. (strain TM1040) (Silicibacter sp.).